The primary structure comprises 310 residues: Pantothenate kinase (310 aa).

Glycine 95 to serine 102 serves as a coordination point for ATP.

This sequence belongs to the prokaryotic pantothenate kinase family.

It is found in the cytoplasm. The enzyme catalyses (R)-pantothenate + ATP = (R)-4'-phosphopantothenate + ADP + H(+). Its pathway is cofactor biosynthesis; coenzyme A biosynthesis; CoA from (R)-pantothenate: step 1/5. This is Pantothenate kinase from Rhodococcus erythropolis (strain PR4 / NBRC 100887).